The chain runs to 97 residues: Apolipoprotein C-II (97 aa).

The signal sequence occupies residues 1–22; sequence MGSRFFLALFLVILMLGNEVQG. The tract at residues 63-71 is lipid binding; the sequence is SMDEKLRDM. The lipoprotein lipase cofactor stretch occupies residues 75-97; sequence SSAAMSTYAGIFTDQLLTLLRGE.

This sequence belongs to the apolipoprotein C2 family. In terms of tissue distribution, adult and fetal liver, intestine and peritoneal macrophages.

The protein localises to the secreted. In terms of biological role, component of chylomicrons, very low-density lipoproteins (VLDL), low-density lipoproteins (LDL), and high-density lipoproteins (HDL) in plasma. Plays an important role in lipoprotein metabolism as an activator of lipoprotein lipase. The protein is Apolipoprotein C-II (Apoc2) of Mus musculus (Mouse).